The primary structure comprises 323 residues: Ubiquinone biosynthesis protein COQ4, mitochondrial (323 aa).

Zn(2+) contacts are provided by histidine 205, aspartate 206, histidine 209, and glutamate 221.

Belongs to the COQ4 family. As to quaternary structure, component of a multi-subunit COQ enzyme complex, composed of at least COQ3, COQ4, COQ5, COQ6, COQ7 and COQ9. Requires Zn(2+) as cofactor.

Its subcellular location is the mitochondrion inner membrane. The enzyme catalyses a 4-hydroxy-3-methoxy-5-(all-trans-polyprenyl)benzoate + H(+) = a 2-methoxy-6-(all-trans-polyprenyl)phenol + CO2. Its pathway is cofactor biosynthesis; ubiquinone biosynthesis. Functionally, lyase that catalyzes the C1-decarboxylation of 4-hydroxy-3-methoxy-5-(all-trans-polyprenyl)benzoic acid into 2-methoxy-6-(all-trans-polyprenyl)phenol during ubiquinone biosynthesis. The polypeptide is Ubiquinone biosynthesis protein COQ4, mitochondrial (Candida albicans (strain SC5314 / ATCC MYA-2876) (Yeast)).